A 79-amino-acid polypeptide reads, in one-letter code: DNA gyrase inhibitor YacG (79 aa).

The Zn(2+) site is built by C7, C10, C26, and C30.

Belongs to the DNA gyrase inhibitor YacG family. Interacts with GyrB. Zn(2+) is required as a cofactor.

Inhibits all the catalytic activities of DNA gyrase by preventing its interaction with DNA. Acts by binding directly to the C-terminal domain of GyrB, which probably disrupts DNA binding by the gyrase. The chain is DNA gyrase inhibitor YacG from Shewanella pealeana (strain ATCC 700345 / ANG-SQ1).